Consider the following 62-residue polypeptide: uncharacterized protein (62 aa).

Residues 37 to 57 form a helical membrane-spanning segment; that stretch reads FILGVILLGVIIESITLLVVY.

It localises to the membrane. This is an uncharacterized protein from Dictyostelium discoideum (Social amoeba).